Reading from the N-terminus, the 171-residue chain is Crossover junction endodeoxyribonuclease RuvC (171 aa).

Residues D7, E66, and D138 contribute to the active site. Mg(2+) contacts are provided by D7, E66, and D138.

Belongs to the RuvC family. As to quaternary structure, homodimer which binds Holliday junction (HJ) DNA. The HJ becomes 2-fold symmetrical on binding to RuvC with unstacked arms; it has a different conformation from HJ DNA in complex with RuvA. In the full resolvosome a probable DNA-RuvA(4)-RuvB(12)-RuvC(2) complex forms which resolves the HJ. Mg(2+) is required as a cofactor.

The protein localises to the cytoplasm. It catalyses the reaction Endonucleolytic cleavage at a junction such as a reciprocal single-stranded crossover between two homologous DNA duplexes (Holliday junction).. The RuvA-RuvB-RuvC complex processes Holliday junction (HJ) DNA during genetic recombination and DNA repair. Endonuclease that resolves HJ intermediates. Cleaves cruciform DNA by making single-stranded nicks across the HJ at symmetrical positions within the homologous arms, yielding a 5'-phosphate and a 3'-hydroxyl group; requires a central core of homology in the junction. The consensus cleavage sequence is 5'-(A/T)TT(C/G)-3'. Cleavage occurs on the 3'-side of the TT dinucleotide at the point of strand exchange. HJ branch migration catalyzed by RuvA-RuvB allows RuvC to scan DNA until it finds its consensus sequence, where it cleaves and resolves the cruciform DNA. This chain is Crossover junction endodeoxyribonuclease RuvC, found in Francisella philomiragia subsp. philomiragia (strain ATCC 25017 / CCUG 19701 / FSC 153 / O#319-036).